An 818-amino-acid polypeptide reads, in one-letter code: Hillarin (818 aa).

An LIM zinc-binding domain is found at 9 to 76 (STCLRCSETV…SSHVPKSGPG (68 aa)). The segment at 97 to 141 (FVNEQIRGTRSEVDGGPLGGSRQSTPNGYGSREISSPSQNDSDYK) is disordered. Positions 117–137 (SRQSTPNGYGSREISSPSQND) are enriched in polar residues. Positions 216-272 (QDEWERELQRLTHKFEKELATSRRSRDEANILTMRHEQQKEDLEKNMTLRRSKKKES) form a coiled coil.

This sequence belongs to the transglutaminase-like superfamily. In terms of assembly, interacts with pnut. In terms of tissue distribution, localizes to the neuropil of the embryonic central nervous system (at protein level). Also detected in third instar larval brain (at protein level).

It localises to the cytoplasm. The protein localises to the cell cortex. Its subcellular location is the cleavage furrow. Functionally, may act as a modulator of septin function during cytokinesis in the developing nervous system. In Drosophila melanogaster (Fruit fly), this protein is Hillarin.